The sequence spans 263 residues: MNRINQLFDSNPRDLLSIYFCAGYPTLEGTTEVIRTLEKHGVNMIEIGIPFSDPMADGMVIQNAATQALRNGMSLRLLFEQLHDIRRDVKIPLILMGYLNPIMQFGFDNFCRQCAECGIDGVIIPDLPFKDYQEHFRTIAERYDVKVIMLITPETSEERVREIDEHTDGFIYMVSSAATTGAQQDFDGQKRAYFKKIEKMNLRNPRMVGFGISNEATFRAACENASGAIIGSRFVTLLHEEKNPEKAITRLKAILNLSSNDLR.

Catalysis depends on proton acceptor residues Glu46 and Asp57.

This sequence belongs to the TrpA family. Tetramer of two alpha and two beta chains.

It catalyses the reaction (1S,2R)-1-C-(indol-3-yl)glycerol 3-phosphate + L-serine = D-glyceraldehyde 3-phosphate + L-tryptophan + H2O. Its pathway is amino-acid biosynthesis; L-tryptophan biosynthesis; L-tryptophan from chorismate: step 5/5. In terms of biological role, the alpha subunit is responsible for the aldol cleavage of indoleglycerol phosphate to indole and glyceraldehyde 3-phosphate. This Bacteroides fragilis (strain ATCC 25285 / DSM 2151 / CCUG 4856 / JCM 11019 / LMG 10263 / NCTC 9343 / Onslow / VPI 2553 / EN-2) protein is Tryptophan synthase alpha chain.